Consider the following 73-residue polypeptide: Disintegrin cerastin (73 aa).

Residues 1–73 enclose the Disintegrin domain; that stretch reads EAGEECDCGT…ADCPRNGLYG (73 aa). 6 disulfide bridges follow: Cys-6-Cys-21, Cys-8-Cys-16, Cys-15-Cys-38, Cys-29-Cys-35, Cys-34-Cys-59, and Cys-47-Cys-66. The Cell attachment site motif lies at 51 to 53; that stretch reads RGD.

It belongs to the venom metalloproteinase (M12B) family. P-II subfamily. P-IIa sub-subfamily. In terms of assembly, monomer (disintegrin). Expressed by the venom gland.

It is found in the secreted. Functionally, inhibits fibrinogen interaction with platelets. Acts by binding to alpha-IIb/beta-3 (ITGA2B/ITGB3) on the platelet surface and inhibits aggregation induced by ADP, thrombin, platelet-activating factor and collagen. The protein is Disintegrin cerastin of Crotalus cerastes cerastes (Mojave desert sidewinder).